A 314-amino-acid chain; its full sequence is Secreted frizzled-related protein 1 (314 aa).

The signal sequence occupies residues 1 to 31; it reads MGVGRSEGGRRGAALGVLLALGVALLAVGSA. The region spanning 53–169 is the FZ domain; the sequence is TKPHQCVAIP…FPQDYVCIAM (117 aa). 5 disulfide bridges follow: C58–C121, C68–C114, C105–C140, C129–C166, and C133–C157. The N-linked (GlcNAc...) asparagine glycan is linked to N173. 3 disulfides stabilise this stretch: C186-C256, C189-C258, and C203-C306. The region spanning 186–306 is the NTR domain; that stretch reads CPPCDNEMKS…FMKKVKAPDC (121 aa).

This sequence belongs to the secreted frizzled-related protein (sFRP) family.

It localises to the secreted. Soluble frizzled-related proteins (sFRPS) function as modulators of Wnt signaling through direct interaction with Wnts. They have a role in regulating cell growth and differentiation in specific cell types. The sequence is that of Secreted frizzled-related protein 1 (SFRP1) from Gallus gallus (Chicken).